Consider the following 1499-residue polypeptide: Ubiquitinating/deubiquitinating enzyme SdeA (1499 aa).

The deubiquitinase stretch occupies residues 1–193; the sequence is MPKYVEGVEL…GKALRENTEK (193 aa). Catalysis depends on for deubiquitinase activity residues histidine 64 and aspartate 80. Cysteine 118 (nucleophile; for deubiquitinase activity) is an active-site residue. Residues 760-1000 are mono-ADP-ribosyltransferase; the sequence is PPTRLFRGLN…KALAAFPSDT (241 aa). 766–772 is an NAD(+) binding site; sequence RGLNLSE. The residue at position 860 (glutamate 860) is a 5-glutamyl glutamate. Glutamate 862 is an NAD(+) binding site. Residues 1059–1181 are a coiled coil; that stretch reads KEMGTIRREL…IDTKLADAYL (123 aa).

The protein belongs to the SidE family. As to quaternary structure, interacts with IcmS. Is able to ubiquitinate itself, but this modification is not required to ubiquitinate Rab33b. Post-translationally, glutamylated at Glu-860 by SidJ; glutamylation inhibits SdeA activity to catalyze the production of ADP-ribosylated ubiquitin.

The protein localises to the secreted. It is found in the host cell. It catalyses the reaction L-arginyl-[protein] + NAD(+) = N(omega)-(ADP-D-ribosyl)-L-arginyl-[protein] + nicotinamide + H(+). Its activity is regulated as follows. Ubiquitination catalyzed by SdeA is insensitive to the cysteine alkylation agent maleimide, suggesting that a cysteine conjugation of ubiquitin does not form during the reaction. In terms of biological role, secreted effector that interferes with the host cell ubiquitin pathway and is required for intracellular bacterial replication. Catalyzes the ubiquitination of several mammalian Rab proteins (Rab33b, Rab1, Rab6a and Rab30) during L.pneumophila infection, without engaging the standard cellular enzyme cascade (E1 and E2). Transfers an ADP-ribose moiety from NAD to the 'Arg-42' residue of ubiquitin in a reaction that releases nicotinamide. The modified ubiquitin is subsequently transferred to serine residues of the substrate protein via a phosphoribose linker that results in the release of AMP. Cannot ubiquitinate the endosomal Rab5 or the cytoskeletal small GTPase Rac1. Also acts as a deubiquitinase (DUB), catalyzing the cleavage of three of the most abundant polyubiquitin chains ('Lys-11', 'Lys-48' and 'Lys-63') with a distinct preference for 'Lys-63' linkages; is thus able to efficiently remove 'Lys-63'-linked polyubiquitin chains from the phagosomal surface. Is also able to remove NEDD8 from neddylated proteins, but is unable to recognize SUMO. The DUB activity of SdeA is important for regulating the dynamics of ubiquitin association with the bacterial phagosome, but is dispensable for its role in intracellular bacterial replication. In Legionella pneumophila subsp. pneumophila (strain Philadelphia 1 / ATCC 33152 / DSM 7513), this protein is Ubiquitinating/deubiquitinating enzyme SdeA.